Reading from the N-terminus, the 471-residue chain is Histone deacetylase 6 (471 aa).

Residue Met-1 is modified to N-acetylmethionine. A histone deacetylase region spans residues 20–333; sequence RVSYFYEPTI…WCYETAVAVG (314 aa). Catalysis depends on His-153, which acts as the Proton donor/acceptor. Residues Asp-188, His-190, and Asp-276 each coordinate Zn(2+). The tract at residues 389–471 is disordered; it reads PSVQFQHTPP…PEPDVNPPSS (83 aa). The span at 453 to 463 shows a compositional bias: acidic residues; it reads GEDEMDDDNPE.

It belongs to the histone deacetylase family. HD type 1 subfamily. In terms of assembly, interacts with Coi1, which functions in an SCF complex that recruits regulators for ubiquitination. Interacts with AHL22. Interacts with AS1. Part of the AS1 repressor complex composed of AS1, LBD6/AS2 and HDA6. Binds to EBS and SHL. Interacts with MBD6. Interacts with HDA5. Interacts with FLD. Zn(2+) serves as cofactor. Not detected in leaves, stems, flowers and young siliques.

The protein localises to the nucleus. The protein resides in the nucleolus. The enzyme catalyses N(6)-acetyl-L-lysyl-[histone] + H2O = L-lysyl-[histone] + acetate. Inhibited by trichostatin A. Functionally, responsible for the deacetylation of lysine residues on the N-terminal part of the core histones (H2A, H2B, H3 and H4). Might remove acetyl residues only from specific targets, such as rDNA repeats or complex transgenes. Histone deacetylation gives a tag for epigenetic repression and plays an important role in transcriptional regulation, cell cycle progression and developmental events. Histone deacetylases act via the formation of large multiprotein complexes. Required for rRNA gene silencing in nucleolar dominance. Plays a role in transgene silencing, but this effect seems to bee independent of the histone deacetylase activity. Part of the AS1 repressor complex to regulate the KNOX expression in leaf development. Binds to KNAT1, KNAT2, and KNATM chromatin. Involved in the regulation of flowering time. Forms a histone deacetylase complex with HDA5, FLD and MSI4/FVE that represses FLC gene expression to control flowering time. The chain is Histone deacetylase 6 from Arabidopsis thaliana (Mouse-ear cress).